We begin with the raw amino-acid sequence, 704 residues long: MIKQFQTELAGKTLHVEIGKYAEQASGSCMVRYGDTTVLVNATASKSPREGIDFFPLSVDYEEKLYAVGKIPGGFIKREARPSEKAVLTSRLIDRPIRPLFPKGYRNEVQVIATVMSVDKDYAPDIVAMIGSSIALSISDIPFGGPTGSVNVGLVNGEFVLNPTSDQRAISDIDLVVSGTKDAIMMIESGANEVTEDQMLDALMFAHEEIKTIVAFIEEIVAEVGKPKQEVQLFAIDETLDMEVRVFAKDKIVTAMKTFDKMERNERLDNVKKEILVHFSKQYENELKSIVEVINSIIKEQFRYMITHDKVRPDERALDEIRPITSEVGILPRTHGTGLFTRGQTQVLTVATLGALGEVQILDGLGEEESKRYMHHYNFPPYSVGEAKFLRGPGRREIGHGALAERALLPMVPSQDDFPYAIRLVSEVLSSNGSSSQASVCGSTLALLDAGVPIKDMVAGIAMGLVKENDKIAILSDIQGMEDALGDMDFKVAGTDKGITAIQMDIKIKGIHKDILKDALEQARVGRLHILDKMKKAIDKPRPELSPFAPRVLKMKIHPDKIRDVIGSGGKTINRIIDETGVKIDIDNDGTIFIAAESQEAVEKAIIIIENIIKDPEVGQNYTGKVIKIMNFGAFLEILPGKEGLLHVSNIAHERVNKVEDVLEVGQEIEVKVMEIDQQGKINLSRKALLPKESKAENTKEEKA.

2 residues coordinate Mg(2+): aspartate 483 and aspartate 489. The region spanning 550-609 (PRVLKMKIHPDKIRDVIGSGGKTINRIIDETGVKIDIDNDGTIFIAAESQEAVEKAIIII) is the KH domain. Residues 619 to 687 (GQNYTGKVIK…QQGKINLSRK (69 aa)) form the S1 motif domain.

It belongs to the polyribonucleotide nucleotidyltransferase family. Mg(2+) serves as cofactor.

Its subcellular location is the cytoplasm. It catalyses the reaction RNA(n+1) + phosphate = RNA(n) + a ribonucleoside 5'-diphosphate. Functionally, involved in mRNA degradation. Catalyzes the phosphorolysis of single-stranded polyribonucleotides processively in the 3'- to 5'-direction. This is Polyribonucleotide nucleotidyltransferase 4 from Alkaliphilus metalliredigens (strain QYMF).